The primary structure comprises 272 residues: GPN-loop GTPase 3 (272 aa).

Position 13 to 18 (13 to 18) interacts with GTP; sequence GAGKST. Residues 70–72 carry the Gly-Pro-Asn (GPN)-loop; involved in dimer interface motif; it reads GPN. Position 173 to 176 (173 to 176) interacts with GTP; that stretch reads SKLD.

This sequence belongs to the GPN-loop GTPase family. In terms of assembly, heterodimers with NPA3/GPN1 or GPN2. Binds to RNA polymerase II (RNAPII).

Its function is as follows. Small GTPase required for proper nuclear localization of RNA polymerase II and III (RNAPII and RNAPIII). May act at an RNAP assembly step prior to nuclear import. Promotes sister chromatid separation during anaphase. The protein is GPN-loop GTPase 3 of Saccharomyces cerevisiae (strain ATCC 204508 / S288c) (Baker's yeast).